A 249-amino-acid polypeptide reads, in one-letter code: Indole-3-glycerol phosphate synthase (249 aa).

The protein belongs to the TrpC family.

It carries out the reaction 1-(2-carboxyphenylamino)-1-deoxy-D-ribulose 5-phosphate + H(+) = (1S,2R)-1-C-(indol-3-yl)glycerol 3-phosphate + CO2 + H2O. Its pathway is amino-acid biosynthesis; L-tryptophan biosynthesis; L-tryptophan from chorismate: step 4/5. In Pyrobaculum neutrophilum (strain DSM 2338 / JCM 9278 / NBRC 100436 / V24Sta) (Thermoproteus neutrophilus), this protein is Indole-3-glycerol phosphate synthase.